A 215-amino-acid chain; its full sequence is Probable transaldolase (215 aa).

The active-site Schiff-base intermediate with substrate is the Lys-83.

The protein belongs to the transaldolase family. Type 3B subfamily.

Its subcellular location is the cytoplasm. The catalysed reaction is D-sedoheptulose 7-phosphate + D-glyceraldehyde 3-phosphate = D-erythrose 4-phosphate + beta-D-fructose 6-phosphate. It functions in the pathway carbohydrate degradation; pentose phosphate pathway; D-glyceraldehyde 3-phosphate and beta-D-fructose 6-phosphate from D-ribose 5-phosphate and D-xylulose 5-phosphate (non-oxidative stage): step 2/3. Transaldolase is important for the balance of metabolites in the pentose-phosphate pathway. The chain is Probable transaldolase from Desulforudis audaxviator (strain MP104C).